A 570-amino-acid chain; its full sequence is High-affinity hexose transporter HXT7 (570 aa).

At Met-1–Ser-60 the chain is on the cytoplasmic side. The chain crosses the membrane as a helical span at residues Ala-61–Trp-81. Residues Asp-82–Gly-116 lie on the Extracellular side of the membrane. An N-linked (GlcNAc...) asparagine glycan is attached at Asn-91. A helical membrane pass occupies residues Leu-117 to Gly-137. At Asp-138 to Lys-143 the chain is on the cytoplasmic side. A helical transmembrane segment spans residues Val-144–Ile-164. At Asn-165–Arg-174 the chain is on the extracellular side. The helical transmembrane segment at Ile-175 to Val-195 threads the bilayer. Over Ser-196–Arg-201 the chain is Cytoplasmic. Residues Gly-202–Thr-222 traverse the membrane as a helical segment. The Extracellular segment spans residues Asn-223–Arg-236. The N-linked (GlcNAc...) asparagine glycan is linked to Asn-228. Residues Val-237 to Pro-257 traverse the membrane as a helical segment. At Glu-258 to Asp-340 the chain is on the cytoplasmic side. Residues Asn-341–Ser-357 traverse the membrane as a helical segment. The Extracellular portion of the chain corresponds to Asp-358–Ser-363. A helical membrane pass occupies residues Ile-364 to Val-381. Over Glu-382–Thr-388 the chain is Cytoplasmic. The chain crosses the membrane as a helical span at residues Cys-389–Val-409. The Extracellular portion of the chain corresponds to Thr-410–Val-431. Residues Phe-432–Val-452 traverse the membrane as a helical segment. Topologically, residues Ser-453 to Thr-469 are cytoplasmic. Residues Ala-470–Ile-490 traverse the membrane as a helical segment. Residue Asn-491 is a topological domain, extracellular. A helical transmembrane segment spans residues Phe-492–Val-512. The Cytoplasmic segment spans residues Val-513–Lys-570. Thr-556 is subject to Phosphothreonine. A Glycyl lysine isopeptide (Lys-Gly) (interchain with G-Cter in ubiquitin) cross-link involves residue Lys-560.

Belongs to the major facilitator superfamily. Sugar transporter (TC 2.A.1.1) family.

The protein resides in the membrane. In terms of biological role, high-affinity glucose transporter. In Saccharomyces cerevisiae (strain ATCC 204508 / S288c) (Baker's yeast), this protein is High-affinity hexose transporter HXT7 (HXT7).